A 357-amino-acid polypeptide reads, in one-letter code: Alanine racemase (357 aa).

Lysine 35 acts as the Proton acceptor; specific for D-alanine in catalysis. Lysine 35 is modified (N6-(pyridoxal phosphate)lysine). Arginine 128 is a substrate binding site. Tyrosine 254 acts as the Proton acceptor; specific for L-alanine in catalysis. Methionine 302 is a substrate binding site.

Belongs to the alanine racemase family. The cofactor is pyridoxal 5'-phosphate.

It carries out the reaction L-alanine = D-alanine. It functions in the pathway amino-acid biosynthesis; D-alanine biosynthesis; D-alanine from L-alanine: step 1/1. Its function is as follows. Catalyzes the interconversion of L-alanine and D-alanine. May also act on other amino acids. The chain is Alanine racemase (alr) from Marinobacter nauticus (strain ATCC 700491 / DSM 11845 / VT8) (Marinobacter aquaeolei).